The sequence spans 341 residues: S-adenosylmethionine:tRNA ribosyltransferase-isomerase (341 aa).

The protein belongs to the QueA family. Monomer.

The protein resides in the cytoplasm. It carries out the reaction 7-aminomethyl-7-carbaguanosine(34) in tRNA + S-adenosyl-L-methionine = epoxyqueuosine(34) in tRNA + adenine + L-methionine + 2 H(+). It participates in tRNA modification; tRNA-queuosine biosynthesis. Functionally, transfers and isomerizes the ribose moiety from AdoMet to the 7-aminomethyl group of 7-deazaguanine (preQ1-tRNA) to give epoxyqueuosine (oQ-tRNA). The chain is S-adenosylmethionine:tRNA ribosyltransferase-isomerase from Staphylococcus haemolyticus (strain JCSC1435).